We begin with the raw amino-acid sequence, 261 residues long: Phosphatidylglycerol--prolipoprotein diacylglyceryl transferase (261 aa).

The next 3 helical transmembrane spans lie at 20–40 (LAIH…VWLA), 54–74 (IIDF…LYYV), and 94–114 (GGGA…VFSY). An a 1,2-diacyl-sn-glycero-3-phospho-(1'-sn-glycerol)-binding site is contributed by arginine 139. 3 helical membrane-spanning segments follow: residues 175–195 (MPTF…VMVF), 205–225 (GDIF…VEGM), and 235–255 (ARVS…LFIY).

This sequence belongs to the Lgt family.

The protein resides in the cell membrane. It carries out the reaction L-cysteinyl-[prolipoprotein] + a 1,2-diacyl-sn-glycero-3-phospho-(1'-sn-glycerol) = an S-1,2-diacyl-sn-glyceryl-L-cysteinyl-[prolipoprotein] + sn-glycerol 1-phosphate + H(+). The protein operates within protein modification; lipoprotein biosynthesis (diacylglyceryl transfer). Functionally, catalyzes the transfer of the diacylglyceryl group from phosphatidylglycerol to the sulfhydryl group of the N-terminal cysteine of a prolipoprotein, the first step in the formation of mature lipoproteins. The protein is Phosphatidylglycerol--prolipoprotein diacylglyceryl transferase of Lactococcus lactis subsp. lactis (strain IL1403) (Streptococcus lactis).